Consider the following 181-residue polypeptide: Oligoribonuclease (181 aa).

The Exonuclease domain occupies 8–171 (LIWIDMEMTG…ADIYDSIEEL (164 aa)). The active site involves Y129.

Belongs to the oligoribonuclease family.

It is found in the cytoplasm. Its function is as follows. 3'-to-5' exoribonuclease specific for small oligoribonucleotides. The polypeptide is Oligoribonuclease (Nitrosomonas eutropha (strain DSM 101675 / C91 / Nm57)).